A 226-amino-acid polypeptide reads, in one-letter code: Ras-related protein RGP1 (226 aa).

Residue 25–32 coordinates GTP; the sequence is GDSAVGKS. Positions 47 to 55 match the Effector region motif; the sequence is SKATIGVEF. GTP is bound by residues 73 to 77 and 131 to 134; these read DTAGQ and NKSD. S-geranylgeranyl cysteine attachment occurs at residues Cys-223 and Cys-224.

It belongs to the small GTPase superfamily. Rab family.

Its subcellular location is the cell membrane. In terms of biological role, may play an important role in plant growth and development. The sequence is that of Ras-related protein RGP1 (RGP1) from Oryza sativa subsp. japonica (Rice).